A 291-amino-acid chain; its full sequence is Small ribosomal subunit protein uS2 (291 aa).

The disordered stretch occupies residues 231–291; the sequence is NRGSGTTEAP…AAEAPAEDAK (61 aa). Over residues 246–259 the composition is skewed to basic and acidic residues; it reads EWERELLEGSKAEE. A compositionally biased stretch (low complexity) spans 260–285; that stretch reads AAAAAPAENAEAPAAPAAEAPAAAEA.

The protein belongs to the universal ribosomal protein uS2 family.

The chain is Small ribosomal subunit protein uS2 from Pseudarthrobacter chlorophenolicus (strain ATCC 700700 / DSM 12829 / CIP 107037 / JCM 12360 / KCTC 9906 / NCIMB 13794 / A6) (Arthrobacter chlorophenolicus).